The primary structure comprises 150 residues: Large ribosomal subunit protein bL9 (150 aa).

This sequence belongs to the bacterial ribosomal protein bL9 family.

In terms of biological role, binds to the 23S rRNA. This chain is Large ribosomal subunit protein bL9, found in Shewanella loihica (strain ATCC BAA-1088 / PV-4).